A 525-amino-acid chain; its full sequence is Lysine--tRNA ligase (525 aa).

Mg(2+) contacts are provided by E430 and E437.

This sequence belongs to the class-II aminoacyl-tRNA synthetase family. Homodimer. Mg(2+) serves as cofactor.

Its subcellular location is the cytoplasm. The enzyme catalyses tRNA(Lys) + L-lysine + ATP = L-lysyl-tRNA(Lys) + AMP + diphosphate. The polypeptide is Lysine--tRNA ligase (Chlamydia caviae (strain ATCC VR-813 / DSM 19441 / 03DC25 / GPIC) (Chlamydophila caviae)).